A 216-amino-acid chain; its full sequence is Peptide methionine sulfoxide reductase MsrA (216 aa).

C54 is an active-site residue.

Belongs to the MsrA Met sulfoxide reductase family.

The catalysed reaction is L-methionyl-[protein] + [thioredoxin]-disulfide + H2O = L-methionyl-(S)-S-oxide-[protein] + [thioredoxin]-dithiol. It catalyses the reaction [thioredoxin]-disulfide + L-methionine + H2O = L-methionine (S)-S-oxide + [thioredoxin]-dithiol. Its function is as follows. Has an important function as a repair enzyme for proteins that have been inactivated by oxidation. Catalyzes the reversible oxidation-reduction of methionine sulfoxide in proteins to methionine. In Xanthomonas euvesicatoria pv. vesicatoria (strain 85-10) (Xanthomonas campestris pv. vesicatoria), this protein is Peptide methionine sulfoxide reductase MsrA.